The sequence spans 329 residues: Ankyrin repeat and SOCS box protein 5 (329 aa).

ANK repeat units lie at residues 69–98 (ADRS…NVNA), 102–131 (DHVT…NANA), 135–164 (DGVT…KAQL), 167–196 (CFPS…DVDQ), 200–229 (HLGT…DVHK), and 232–261 (YWDT…DINA). One can recognise an SOCS box domain in the interval 278-329 (AVERILLQHEATPSSLCQLCRLCIRNYIGRQRFHLIPQLQLPTLLQNFLQYR).

Belongs to the ankyrin SOCS box (ASB) family.

It participates in protein modification; protein ubiquitination. May be a substrate-recognition component of a SCF-like ECS (Elongin-Cullin-SOCS-box protein) E3 ubiquitin-protein ligase complex which mediates the ubiquitination and subsequent proteasomal degradation of target proteins. May play a role in the initiation of arteriogenesis. This Mus musculus (Mouse) protein is Ankyrin repeat and SOCS box protein 5 (Asb5).